The following is a 200-amino-acid chain: Holliday junction branch migration complex subunit RuvA (200 aa).

Positions 1 to 63 (MIASVRGEVL…EDSMTLYGFP (63 aa)) are domain I. The interval 64-142 (DSESKELFGL…AVGSTSGAVP (79 aa)) is domain II. Positions 142–146 (PLGAG) are flexible linker. Residues 147-200 (GGGSVRDQIVEALVGLGFPAKQAEQATDSVLAEAPESTTSSALRSALSLLGKTR) form a domain III region.

Belongs to the RuvA family. In terms of assembly, homotetramer. Forms an RuvA(8)-RuvB(12)-Holliday junction (HJ) complex. HJ DNA is sandwiched between 2 RuvA tetramers; dsDNA enters through RuvA and exits via RuvB. An RuvB hexamer assembles on each DNA strand where it exits the tetramer. Each RuvB hexamer is contacted by two RuvA subunits (via domain III) on 2 adjacent RuvB subunits; this complex drives branch migration. In the full resolvosome a probable DNA-RuvA(4)-RuvB(12)-RuvC(2) complex forms which resolves the HJ.

Its subcellular location is the cytoplasm. Its function is as follows. The RuvA-RuvB-RuvC complex processes Holliday junction (HJ) DNA during genetic recombination and DNA repair, while the RuvA-RuvB complex plays an important role in the rescue of blocked DNA replication forks via replication fork reversal (RFR). RuvA specifically binds to HJ cruciform DNA, conferring on it an open structure. The RuvB hexamer acts as an ATP-dependent pump, pulling dsDNA into and through the RuvAB complex. HJ branch migration allows RuvC to scan DNA until it finds its consensus sequence, where it cleaves and resolves the cruciform DNA. This is Holliday junction branch migration complex subunit RuvA from Rhodococcus opacus (strain B4).